A 169-amino-acid chain; its full sequence is Large ribosomal subunit protein uL18 (169 aa).

Belongs to the universal ribosomal protein uL18 family. Part of the 50S ribosomal subunit. Contacts the 5S and 23S rRNAs.

This is one of the proteins that bind and probably mediate the attachment of the 5S RNA into the large ribosomal subunit, where it forms part of the central protuberance. The polypeptide is Large ribosomal subunit protein uL18 (Methanothrix thermoacetophila (strain DSM 6194 / JCM 14653 / NBRC 101360 / PT) (Methanosaeta thermophila)).